The chain runs to 201 residues: Lipopolysaccharide core heptose(II)-phosphate phosphatase (201 aa).

A signal peptide spans 1–35 (MLAFILRFIKNKSYFALLAGAWVIIAGLTSQHAWS).

The protein belongs to the phosphoglycerate mutase family. Ais subfamily.

The protein localises to the periplasm. It participates in bacterial outer membrane biogenesis; lipopolysaccharide metabolism. In terms of biological role, catalyzes the dephosphorylation of heptose(II) of the outer membrane lipopolysaccharide core. This is Lipopolysaccharide core heptose(II)-phosphate phosphatase from Salmonella arizonae (strain ATCC BAA-731 / CDC346-86 / RSK2980).